Consider the following 44-residue polypeptide: Thymosin beta-10 (44 aa).

It belongs to the thymosin beta family.

It localises to the cytoplasm. The protein resides in the cytoskeleton. In terms of biological role, plays an important role in the organization of the cytoskeleton. Binds to and sequesters actin monomers (G actin) and therefore inhibits actin polymerization. The polypeptide is Thymosin beta-10 (Torpedo marmorata (Marbled electric ray)).